Reading from the N-terminus, the 125-residue chain is Small ribosomal subunit protein uS13 (125 aa).

Residues 93 to 125 (RKGLPVRGQRTKTNARTRKGPKRTVAGKKKAGR) are disordered.

It belongs to the universal ribosomal protein uS13 family. As to quaternary structure, part of the 30S ribosomal subunit. Forms a loose heterodimer with protein S19. Forms two bridges to the 50S subunit in the 70S ribosome.

In terms of biological role, located at the top of the head of the 30S subunit, it contacts several helices of the 16S rRNA. In the 70S ribosome it contacts the 23S rRNA (bridge B1a) and protein L5 of the 50S subunit (bridge B1b), connecting the 2 subunits; these bridges are implicated in subunit movement. Contacts the tRNAs in the A and P-sites. In Arthrobacter sp. (strain FB24), this protein is Small ribosomal subunit protein uS13.